The following is a 220-amino-acid chain: MTSIAHLRKSYERAELSEDASHADPLQQFEKWLKEAISAEIPEPNAMTVATVASNLRPSTRVVLIKGYDERGITWFTNYDSRKGQELAGNPYAALQFHWVELERVVRIEGIVEKVSEEESDSYFHSRPLDSRIGAWASPQSQVISGRSVLVANAAKYGAKFLLNPPRPPHWGGYRLKPDHWQFWQGRKSRLHDRLRYTLIEPASTLPDAKPVWIRERLAP.

Residues 8-11 (RKSY) and Lys-66 contribute to the substrate site. Residues 61 to 66 (RVVLIK), 76 to 77 (FT), Arg-82, and Lys-83 contribute to the FMN site. Residues Tyr-123, Arg-127, and Ser-131 each contribute to the substrate site. FMN is bound by residues 140–141 (QS) and Trp-184. Residue 190–192 (RLH) coordinates substrate. Arg-194 serves as a coordination point for FMN.

The protein belongs to the pyridoxamine 5'-phosphate oxidase family. In terms of assembly, homodimer. FMN is required as a cofactor.

The catalysed reaction is pyridoxamine 5'-phosphate + O2 + H2O = pyridoxal 5'-phosphate + H2O2 + NH4(+). The enzyme catalyses pyridoxine 5'-phosphate + O2 = pyridoxal 5'-phosphate + H2O2. Its pathway is cofactor metabolism; pyridoxal 5'-phosphate salvage; pyridoxal 5'-phosphate from pyridoxamine 5'-phosphate: step 1/1. It functions in the pathway cofactor metabolism; pyridoxal 5'-phosphate salvage; pyridoxal 5'-phosphate from pyridoxine 5'-phosphate: step 1/1. Catalyzes the oxidation of either pyridoxine 5'-phosphate (PNP) or pyridoxamine 5'-phosphate (PMP) into pyridoxal 5'-phosphate (PLP). The protein is Pyridoxine/pyridoxamine 5'-phosphate oxidase of Albidiferax ferrireducens (strain ATCC BAA-621 / DSM 15236 / T118) (Rhodoferax ferrireducens).